We begin with the raw amino-acid sequence, 94 residues long: Co-chaperonin GroES (94 aa).

Belongs to the GroES chaperonin family. Heptamer of 7 subunits arranged in a ring. Interacts with the chaperonin GroEL.

It localises to the cytoplasm. Its function is as follows. Together with the chaperonin GroEL, plays an essential role in assisting protein folding. The GroEL-GroES system forms a nano-cage that allows encapsulation of the non-native substrate proteins and provides a physical environment optimized to promote and accelerate protein folding. GroES binds to the apical surface of the GroEL ring, thereby capping the opening of the GroEL channel. The chain is Co-chaperonin GroES from Tetragenococcus halophilus (Pediococcus halophilus).